Here is a 258-residue protein sequence, read N- to C-terminus: Acyl-[acyl-carrier-protein]--UDP-N-acetylglucosamine O-acyltransferase (258 aa).

It belongs to the transferase hexapeptide repeat family. LpxA subfamily. As to quaternary structure, homotrimer.

Its subcellular location is the cytoplasm. It catalyses the reaction a (3R)-hydroxyacyl-[ACP] + UDP-N-acetyl-alpha-D-glucosamine = a UDP-3-O-[(3R)-3-hydroxyacyl]-N-acetyl-alpha-D-glucosamine + holo-[ACP]. It participates in glycolipid biosynthesis; lipid IV(A) biosynthesis; lipid IV(A) from (3R)-3-hydroxytetradecanoyl-[acyl-carrier-protein] and UDP-N-acetyl-alpha-D-glucosamine: step 1/6. Involved in the biosynthesis of lipid A, a phosphorylated glycolipid that anchors the lipopolysaccharide to the outer membrane of the cell. The chain is Acyl-[acyl-carrier-protein]--UDP-N-acetylglucosamine O-acyltransferase from Pseudomonas aeruginosa (strain LESB58).